Consider the following 688-residue polypeptide: Methionine--tRNA ligase (688 aa).

A 'HIGH' region motif is present at residues 13–23 (PYANGNFHIGH). Residues Cys144, Cys147, Cys157, and Cys160 each coordinate Zn(2+). A 'KMSKS' region motif is present at residues 342 to 346 (KMSKS). Lys345 contacts ATP. The tRNA-binding domain occupies 582–688 (DFAKVDLRIA…PGAQPGMRIH (107 aa)).

The protein belongs to the class-I aminoacyl-tRNA synthetase family. MetG type 1 subfamily. As to quaternary structure, homodimer. The cofactor is Zn(2+).

The protein resides in the cytoplasm. The enzyme catalyses tRNA(Met) + L-methionine + ATP = L-methionyl-tRNA(Met) + AMP + diphosphate. Its function is as follows. Is required not only for elongation of protein synthesis but also for the initiation of all mRNA translation through initiator tRNA(fMet) aminoacylation. This chain is Methionine--tRNA ligase, found in Acidovorax sp. (strain JS42).